The following is a 623-amino-acid chain: Vacuolar-sorting receptor 1 (623 aa).

The N-terminal stretch at methionine 1–alanine 22 is a signal peptide. Over arginine 23–threonine 564 the chain is Lumenal. The PA domain maps to glutamine 54–isoleucine 163. Asparagine 143 is a glycosylation site (N-linked (GlcNAc...) asparagine). EGF-like domains are found at residues glutamate 411–glutamate 461 and glycine 464–glutamate 511. Intrachain disulfides connect cysteine 415-cysteine 433, cysteine 422-cysteine 442, cysteine 444-cysteine 460, cysteine 468-cysteine 488, cysteine 475-cysteine 496, and cysteine 498-cysteine 510. The EGF-like 3; calcium-binding domain maps to aspartate 512–isoleucine 554. An N-linked (GlcNAc...) asparagine glycan is attached at asparagine 537. An intrachain disulfide couples cysteine 540 to cysteine 553. Residues tryptophan 565–valine 585 traverse the membrane as a helical segment. Residues tyrosine 586–glycine 623 are Cytoplasmic-facing. The Tyrosine-based internalization motif motif lies at tyrosine 605–leucine 608.

This sequence belongs to the VSR (BP-80) family. Interacts with the N-terminal propeptide of aleurein (proaleurein).

It is found in the membrane. The protein localises to the golgi apparatus membrane. Its subcellular location is the cytoplasmic vesicle. The protein resides in the clathrin-coated vesicle membrane. It localises to the prevacuolar compartment membrane. Functionally, vacuolar-sorting receptor (VSR) involved in clathrin-coated vesicles sorting from Golgi apparatus to vacuoles. Seems to binds preferentially proteins containing a N-terminal NPIR motif. This Pisum sativum (Garden pea) protein is Vacuolar-sorting receptor 1 (BP80).